A 463-amino-acid chain; its full sequence is Glutamate--tRNA ligase (463 aa).

The 'HIGH' region signature appears at 10 to 20 (PSPTGYLHIGG). Residues 252-256 (KLSKR) carry the 'KMSKS' region motif. K255 is an ATP binding site.

The protein belongs to the class-I aminoacyl-tRNA synthetase family. Glutamate--tRNA ligase type 1 subfamily. In terms of assembly, monomer.

The protein resides in the cytoplasm. The catalysed reaction is tRNA(Glu) + L-glutamate + ATP = L-glutamyl-tRNA(Glu) + AMP + diphosphate. Functionally, catalyzes the attachment of glutamate to tRNA(Glu) in a two-step reaction: glutamate is first activated by ATP to form Glu-AMP and then transferred to the acceptor end of tRNA(Glu). The polypeptide is Glutamate--tRNA ligase (Mycoplasmopsis agalactiae (strain NCTC 10123 / CIP 59.7 / PG2) (Mycoplasma agalactiae)).